The following is a 403-amino-acid chain: Probable tRNA sulfurtransferase (403 aa).

The THUMP domain maps to 60-165 (KLAEERLKPI…KEGVFLSCRT (106 aa)). ATP-binding positions include 183-184 (ML), 208-209 (HF), Arg-265, Gly-287, and Gln-296.

Belongs to the ThiI family.

The protein localises to the cytoplasm. It catalyses the reaction [ThiI sulfur-carrier protein]-S-sulfanyl-L-cysteine + a uridine in tRNA + 2 reduced [2Fe-2S]-[ferredoxin] + ATP + H(+) = [ThiI sulfur-carrier protein]-L-cysteine + a 4-thiouridine in tRNA + 2 oxidized [2Fe-2S]-[ferredoxin] + AMP + diphosphate. It carries out the reaction [ThiS sulfur-carrier protein]-C-terminal Gly-Gly-AMP + S-sulfanyl-L-cysteinyl-[cysteine desulfurase] + AH2 = [ThiS sulfur-carrier protein]-C-terminal-Gly-aminoethanethioate + L-cysteinyl-[cysteine desulfurase] + A + AMP + 2 H(+). Its pathway is cofactor biosynthesis; thiamine diphosphate biosynthesis. In terms of biological role, catalyzes the ATP-dependent transfer of a sulfur to tRNA to produce 4-thiouridine in position 8 of tRNAs, which functions as a near-UV photosensor. Also catalyzes the transfer of sulfur to the sulfur carrier protein ThiS, forming ThiS-thiocarboxylate. This is a step in the synthesis of thiazole, in the thiamine biosynthesis pathway. The sulfur is donated as persulfide by IscS. The chain is Probable tRNA sulfurtransferase from Listeria welshimeri serovar 6b (strain ATCC 35897 / DSM 20650 / CCUG 15529 / CIP 8149 / NCTC 11857 / SLCC 5334 / V8).